The following is a 407-amino-acid chain: Aurora kinase A-A (407 aa).

The span at 1-10 shows a compositional bias: basic and acidic residues; sequence MERAVKENHK. The segment at 1–130 is disordered; it reads MERAVKENHK…KTSAVPKEEG (130 aa). Composition is skewed to polar residues over residues 67–77 and 84–110; these read ILSSQKPTTQI and QGHQ…STPN. Residues 140 to 390 form the Protein kinase domain; that stretch reads FEIGRPLGKG…LKGVLEHPWI (251 aa). ATP is bound by residues lysine 150, lysine 169, and 217 to 220; that span reads LDYA. The active-site Proton acceptor is the aspartate 263. Aspartate 281 lines the ATP pocket. Positions 287–300 are activation segment; it reads HAPSSRRTTLCGTL.

The protein belongs to the protein kinase superfamily. Ser/Thr protein kinase family. Aurora subfamily. In terms of assembly, interacts with kif2c and kif11. Phosphorylated. Autophosphorylated on a serine residue. Highly expressed in ovary and testis.

Its subcellular location is the cytoplasm. It localises to the cytoskeleton. It is found in the spindle. The protein localises to the microtubule organizing center. The protein resides in the centrosome. It carries out the reaction L-seryl-[protein] + ATP = O-phospho-L-seryl-[protein] + ADP + H(+). It catalyses the reaction L-threonyl-[protein] + ATP = O-phospho-L-threonyl-[protein] + ADP + H(+). Functionally, mitotic serine/threonine kinases that contributes to the regulation of cell cycle progression. Associates with the centrosome and the spindle microtubules during mitosis and plays a critical role in various mitotic events including the establishment of mitotic spindle, centrosome duplication, centrosome separation as well as maturation, chromosomal alignment, spindle assembly checkpoint, and cytokinesis. Phosphorylates numerous target proteins. Important for microtubule formation and/or stabilization. The polypeptide is Aurora kinase A-A (aurka-a) (Xenopus laevis (African clawed frog)).